The chain runs to 155 residues: Pathogenesis-related protein A (155 aa).

It belongs to the BetVI family.

This Petroselinum crispum (Parsley) protein is Pathogenesis-related protein A (PCPR1-1).